We begin with the raw amino-acid sequence, 257 residues long: Probable enoyl-CoA hydratase echA17 (257 aa).

Belongs to the enoyl-CoA hydratase/isomerase family.

It carries out the reaction a (3S)-3-hydroxyacyl-CoA = a (2E)-enoyl-CoA + H2O. It catalyses the reaction a 4-saturated-(3S)-3-hydroxyacyl-CoA = a (3E)-enoyl-CoA + H2O. Could possibly oxidize fatty acids using specific components. The protein is Probable enoyl-CoA hydratase echA17 (echA17) of Mycolicibacterium paratuberculosis (strain ATCC BAA-968 / K-10) (Mycobacterium paratuberculosis).